Here is a 338-residue protein sequence, read N- to C-terminus: Ketol-acid reductoisomerase (NADP(+)) (338 aa).

The KARI N-terminal Rossmann domain maps to methionine 1–threonine 181. Residues phenylalanine 24–glutamine 27, arginine 47, serine 50, serine 52, and aspartate 82–glutamine 85 contribute to the NADP(+) site. Residue histidine 107 is part of the active site. NADP(+) is bound at residue glycine 133. The KARI C-terminal knotted domain occupies threonine 182–isoleucine 327. Positions 190, 194, 226, and 230 each coordinate Mg(2+). A substrate-binding site is contributed by serine 251.

Belongs to the ketol-acid reductoisomerase family. Mg(2+) serves as cofactor.

The enzyme catalyses (2R)-2,3-dihydroxy-3-methylbutanoate + NADP(+) = (2S)-2-acetolactate + NADPH + H(+). The catalysed reaction is (2R,3R)-2,3-dihydroxy-3-methylpentanoate + NADP(+) = (S)-2-ethyl-2-hydroxy-3-oxobutanoate + NADPH + H(+). It participates in amino-acid biosynthesis; L-isoleucine biosynthesis; L-isoleucine from 2-oxobutanoate: step 2/4. It functions in the pathway amino-acid biosynthesis; L-valine biosynthesis; L-valine from pyruvate: step 2/4. Functionally, involved in the biosynthesis of branched-chain amino acids (BCAA). Catalyzes an alkyl-migration followed by a ketol-acid reduction of (S)-2-acetolactate (S2AL) to yield (R)-2,3-dihydroxy-isovalerate. In the isomerase reaction, S2AL is rearranged via a Mg-dependent methyl migration to produce 3-hydroxy-3-methyl-2-ketobutyrate (HMKB). In the reductase reaction, this 2-ketoacid undergoes a metal-dependent reduction by NADPH to yield (R)-2,3-dihydroxy-isovalerate. The protein is Ketol-acid reductoisomerase (NADP(+)) of Hydrogenovibrio crunogenus (strain DSM 25203 / XCL-2) (Thiomicrospira crunogena).